Reading from the N-terminus, the 236-residue chain is Orotidine 5'-phosphate decarboxylase (236 aa).

Substrate-binding positions include Asp-17, Lys-39, 66 to 75 (DLKFYDIPNT), Thr-125, Arg-187, Gln-196, Gly-216, and Arg-217. Lys-68 serves as the catalytic Proton donor.

Belongs to the OMP decarboxylase family. Type 1 subfamily. Homodimer.

The enzyme catalyses orotidine 5'-phosphate + H(+) = UMP + CO2. The protein operates within pyrimidine metabolism; UMP biosynthesis via de novo pathway; UMP from orotate: step 2/2. Its function is as follows. Catalyzes the decarboxylation of orotidine 5'-monophosphate (OMP) to uridine 5'-monophosphate (UMP). This is Orotidine 5'-phosphate decarboxylase from Buchnera aphidicola subsp. Baizongia pistaciae (strain Bp).